A 495-amino-acid polypeptide reads, in one-letter code: Type-1 histone deacetylase 1 (495 aa).

Asp-94 provides a ligand contact to substrate. His-136 functions as the Proton acceptor in the catalytic mechanism. Residue Gly-144 participates in substrate binding. The a divalent metal cation site is built by Asp-171, His-173, and Asp-259. Residue Tyr-298 participates in substrate binding. The tract at residues 372-495 (PAAAHHDIPP…EDADVDMDSG (124 aa)) is disordered. The span at 396–413 (DVRISEADRDKKVHHQGE) shows a compositional bias: basic and acidic residues. A compositionally biased stretch (polar residues) spans 425-443 (NYSNGLEATSTSRRNQVSI). A compositionally biased stretch (low complexity) spans 454–480 (NSRNNNNNNNNNNNNNNNNNNNSNNNN).

It belongs to the histone deacetylase family. HD type 1 subfamily.

The protein resides in the nucleus. Its subcellular location is the cytoplasm. The enzyme catalyses N(6)-acetyl-L-lysyl-[histone] + H2O = L-lysyl-[histone] + acetate. Its function is as follows. Responsible for the deacetylation of lysine residues on the N-terminal part of the core histones (H2A, H2B, H3 and H4). Histone deacetylation plays an important role in transcriptional regulation, cell cycle progression and developmental events. Histone deacetylases act via the formation of large multiprotein complexes. This Dictyostelium discoideum (Social amoeba) protein is Type-1 histone deacetylase 1 (hdaA).